A 286-amino-acid polypeptide reads, in one-letter code: Beta-lactamase SHV-1 (286 aa).

The signal sequence occupies residues 1–21 (MRYIRLCIISLLATLPLAVHA). S66 (acyl-ester intermediate) is an active-site residue. C73 and C119 form a disulfide bridge. Residue E164 is the Proton acceptor of the active site. A substrate-binding site is contributed by 230–232 (KTG).

The protein belongs to the class-A beta-lactamase family.

It catalyses the reaction a beta-lactam + H2O = a substituted beta-amino acid. The protein is Beta-lactamase SHV-1 (bla) of Escherichia coli.